Reading from the N-terminus, the 848-residue chain is DNA mismatch repair protein MutS (848 aa).

605 to 612 (GPNMAGKS) contacts ATP.

The protein belongs to the DNA mismatch repair MutS family.

Its function is as follows. This protein is involved in the repair of mismatches in DNA. It is possible that it carries out the mismatch recognition step. This protein has a weak ATPase activity. The sequence is that of DNA mismatch repair protein MutS from Leptospira interrogans serogroup Icterohaemorrhagiae serovar copenhageni (strain Fiocruz L1-130).